We begin with the raw amino-acid sequence, 827 residues long: Periplasmic nitrate reductase (827 aa).

The tat-type signal signal peptide spans 1–32 (MNLSRRDFMKANAALAAASVAGLIIPVKNVNA). The 4Fe-4S Mo/W bis-MGD-type domain maps to 37–93 (ITWDKAVCRFCGTGCAVLVGTKDGRVVASQGDPDAEVNRGLNCIKGYFLPKIMYGKD). Positions 44, 47, 51, and 79 each coordinate [4Fe-4S] cluster. Mo-bis(molybdopterin guanine dinucleotide) contacts are provided by residues Lys-81, Gln-148, Asn-173, Cys-177, 210-217 (WGSNMAEM), 242-246 (STFEH), 261-263 (QSD), Met-372, Gln-376, Asn-482, 508-509 (SD), Lys-531, Asp-558, and 717-726 (TGRILEHWHT). Residue Phe-793 participates in substrate binding. Mo-bis(molybdopterin guanine dinucleotide)-binding residues include Asn-801 and Lys-818.

It belongs to the prokaryotic molybdopterin-containing oxidoreductase family. NasA/NapA/NarB subfamily. As to quaternary structure, component of the periplasmic nitrate reductase NapAB complex composed of NapA and NapB. It depends on [4Fe-4S] cluster as a cofactor. Mo-bis(molybdopterin guanine dinucleotide) is required as a cofactor. In terms of processing, predicted to be exported by the Tat system. The position of the signal peptide cleavage has not been experimentally proven.

It localises to the periplasm. The enzyme catalyses 2 Fe(II)-[cytochrome] + nitrate + 2 H(+) = 2 Fe(III)-[cytochrome] + nitrite + H2O. In terms of biological role, catalytic subunit of the periplasmic nitrate reductase complex NapAB. Receives electrons from NapB and catalyzes the reduction of nitrate to nitrite. This chain is Periplasmic nitrate reductase, found in Histophilus somni (strain 2336) (Haemophilus somnus).